Consider the following 124-residue polypeptide: Small ribosomal subunit protein uS12c (124 aa).

This sequence belongs to the universal ribosomal protein uS12 family. In terms of assembly, part of the 30S ribosomal subunit.

It localises to the plastid. The protein localises to the chloroplast. Its function is as follows. With S4 and S5 plays an important role in translational accuracy. Located at the interface of the 30S and 50S subunits. This Cyanidium caldarium (Red alga) protein is Small ribosomal subunit protein uS12c (rps12).